The following is a 125-amino-acid chain: Fumarate reductase subunit D (125 aa).

3 helical membrane-spanning segments follow: residues 29–49, 64–84, and 102–122; these read VTAL…PLGW, NPIT…HAAH, and VIAL…GWML.

The protein belongs to the FrdD family. In terms of assembly, part of an enzyme complex containing four subunits: a flavoprotein (FrdA), an iron-sulfur protein (FrdB), and two hydrophobic anchor proteins (FrdC and FrdD).

It localises to the cell membrane. Its function is as follows. Anchors the catalytic components of the fumarate reductase complex to the cell membrane, binds quinones. This chain is Fumarate reductase subunit D, found in Mycobacterium bovis (strain BCG / Tokyo 172 / ATCC 35737 / TMC 1019).